The sequence spans 241 residues: Uridylate kinase (241 aa).

Residue 15–18 (KLSG) coordinates ATP. Residues 23–28 (GTEGFG) form an involved in allosteric activation by GTP region. Gly57 is a binding site for UMP. Residues Gly58 and Arg62 each coordinate ATP. UMP contacts are provided by residues Asp77 and 138–145 (TGNPFFTT). Residues Thr165, Tyr171, and Asp174 each coordinate ATP.

It belongs to the UMP kinase family. As to quaternary structure, homohexamer.

The protein localises to the cytoplasm. It catalyses the reaction UMP + ATP = UDP + ADP. It functions in the pathway pyrimidine metabolism; CTP biosynthesis via de novo pathway; UDP from UMP (UMPK route): step 1/1. Allosterically activated by GTP. Inhibited by UTP. In terms of biological role, catalyzes the reversible phosphorylation of UMP to UDP. The chain is Uridylate kinase from Pectobacterium atrosepticum (strain SCRI 1043 / ATCC BAA-672) (Erwinia carotovora subsp. atroseptica).